Reading from the N-terminus, the 109-residue chain is Aquaporin-2 (109 aa).

Residues 1 to 6 lie on the Cytoplasmic side of the membrane; sequence SIAFSR. A helical membrane pass occupies residues 7 to 27; sequence AVFAEFLATLIFVFFGLGSAL. At 28–35 the chain is on the extracellular side; the sequence is NWQQSLPS. The helical transmembrane segment at 36–54 threads the bilayer; it reads VLQIAMAFGLAIGTLVQAL. Residues 55–59 are Cytoplasmic-facing; the sequence is GHISG. The segment at residues 60-69 is an intramembrane region (discontinuously helical); that stretch reads AHINPAVTVA. An NPA 1 motif is present at residues 63–65; sequence NPA. The Cytoplasmic portion of the chain corresponds to 70 to 80; the sequence is CLVGCHVSFLR. A helical membrane pass occupies residues 81 to 102; that stretch reads AAFYVAAQLLGAVAGAALLHEV. Over 103-109 the chain is Extracellular; the sequence is TPSDVRG.

This sequence belongs to the MIP/aquaporin (TC 1.A.8) family. As to quaternary structure, homotetramer. In terms of processing, serine phosphorylation is necessary and sufficient for expression at the apical membrane. Endocytosis is not phosphorylation-dependent. Post-translationally, N-glycosylated.

The protein resides in the apical cell membrane. Its subcellular location is the basolateral cell membrane. It is found in the cell membrane. The protein localises to the cytoplasmic vesicle membrane. It localises to the golgi apparatus. The protein resides in the trans-Golgi network membrane. It carries out the reaction H2O(in) = H2O(out). The catalysed reaction is glycerol(in) = glycerol(out). Forms a water-specific channel that provides the plasma membranes of renal collecting duct with high permeability to water, thereby permitting water to move in the direction of an osmotic gradient. Plays an essential role in renal water homeostasis. Could also be permeable to glycerol. The polypeptide is Aquaporin-2 (Talpa europaea (European mole)).